The following is a 346-amino-acid chain: Nuclear distribution protein nudE-like 1 (346 aa).

Residues 13-190 are a coiled coil; it reads KEEIVYWREL…LAVRERQTNG (178 aa). Disordered stretches follow at residues 184 to 205 and 325 to 346; these read RERQTNGTRKSAPSSPTLDCDK and YDPPGVLGSRPPSPPGMLPLSV. Residues 188-200 show a composition bias toward polar residues; it reads TNGTRKSAPSSPT. The segment covering 335–346 has biased composition (pro residues); that stretch reads PPSPPGMLPLSV.

It belongs to the nudE family. In terms of processing, phosphorylated in mitosis.

It is found in the cytoplasm. Its subcellular location is the cytoskeleton. The protein resides in the microtubule organizing center. It localises to the centrosome. The protein localises to the spindle. Functionally, required for organization of the cellular microtubule array and microtubule anchoring at the centrosome. Positively regulates the activity of the minus-end directed microtubule motor protein dynein. May enhance dynein-mediated microtubule sliding by targeting dynein to the microtubule plus end. Positively regulates lysosome peripheral distribution and ruffled border formation in osteoclasts. In Xenopus tropicalis (Western clawed frog), this protein is Nuclear distribution protein nudE-like 1 (ndel1).